We begin with the raw amino-acid sequence, 366 residues long: Aminomethyltransferase (366 aa).

It belongs to the GcvT family. The glycine cleavage system is composed of four proteins: P, T, L and H.

It carries out the reaction N(6)-[(R)-S(8)-aminomethyldihydrolipoyl]-L-lysyl-[protein] + (6S)-5,6,7,8-tetrahydrofolate = N(6)-[(R)-dihydrolipoyl]-L-lysyl-[protein] + (6R)-5,10-methylene-5,6,7,8-tetrahydrofolate + NH4(+). Its function is as follows. The glycine cleavage system catalyzes the degradation of glycine. The sequence is that of Aminomethyltransferase from Bacillus cereus (strain ATCC 10987 / NRS 248).